The sequence spans 435 residues: MSNIVAIVGRPNVGKSTFFNRLVGARIAIMDDESGVTRDRHYGEAEWCGKFFTVIDTGGYVTGSDDIFEGQIRDQVDIAIDEADVILFLVDSDVGVHHLDQEFANKIRRSKKPVILVANKSDNNKRLHMSAEFYELGMGEVWPISSQNGTGTGELLDEVISHFKDEGEEDPNKGIPRIAVLGRPNAGKSSYVNALLGTNRSIVTDQAGTTRDSITSHYNVFGKEFIFVDTAGIRKKSRIKEDVEYYSILRSVKALEESDVCVIMIDAERGIESQDMNIIWMAHNNKKGIVILVNKWDLIEKDSKTAQVFQENIREALKPIDYPLIMFISVLNKQRLFQSVEAIMKVYENRGKRIPTSELNDKILKEIDYNPPPATKQKYVKIKYVTQLPTKSPTFAFFCNLPQYVGESYSRFLEHKIRGYFDFEGVPISIVYRKK.

EngA-type G domains follow at residues 3–167 (NIVA…KDEG) and 176–351 (PRIA…ENRG). GTP is bound by residues 9-16 (GRPNVGKS), 56-60 (DTGGY), 119-122 (NKSD), 182-189 (GRPNAGKS), 229-233 (DTAGI), and 294-297 (NKWD). Residues 352–435 (KRIPTSELND…VPISIVYRKK (84 aa)) enclose the KH-like domain.

This sequence belongs to the TRAFAC class TrmE-Era-EngA-EngB-Septin-like GTPase superfamily. EngA (Der) GTPase family. As to quaternary structure, associates with the 50S ribosomal subunit.

GTPase that plays an essential role in the late steps of ribosome biogenesis. This is GTPase Der from Cytophaga hutchinsonii (strain ATCC 33406 / DSM 1761 / CIP 103989 / NBRC 15051 / NCIMB 9469 / D465).